Here is a 219-residue protein sequence, read N- to C-terminus: 2-phospho-L-lactate guanylyltransferase (219 aa).

Belongs to the CofC family. Homodimer.

It catalyses the reaction (2S)-2-phospholactate + GTP + H(+) = (2S)-lactyl-2-diphospho-5'-guanosine + diphosphate. The protein operates within cofactor biosynthesis; coenzyme F420 biosynthesis. Its function is as follows. Guanylyltransferase that catalyzes the activation of (2S)-2-phospholactate (2-PL) as (2S)-lactyl-2-diphospho-5'-guanosine, via the condensation of 2-PL with GTP. It is involved in the biosynthesis of coenzyme F420, a hydride carrier cofactor. In Methanocaldococcus vulcanius (strain ATCC 700851 / DSM 12094 / M7) (Methanococcus vulcanius), this protein is 2-phospho-L-lactate guanylyltransferase.